Here is a 557-residue protein sequence, read N- to C-terminus: Formate--tetrahydrofolate ligase (557 aa).

66-73 (TPAGEGKS) provides a ligand contact to ATP.

The protein belongs to the formate--tetrahydrofolate ligase family.

The catalysed reaction is (6S)-5,6,7,8-tetrahydrofolate + formate + ATP = (6R)-10-formyltetrahydrofolate + ADP + phosphate. It functions in the pathway one-carbon metabolism; tetrahydrofolate interconversion. This Clostridium botulinum (strain Kyoto / Type A2) protein is Formate--tetrahydrofolate ligase.